A 441-amino-acid chain; its full sequence is Homogentisate 1,2-dioxygenase (441 aa).

The active-site Proton acceptor is His287. Fe cation-binding residues include His330 and Glu336. The homogentisate site is built by Tyr345 and His366. A Fe cation-binding site is contributed by His366.

It belongs to the homogentisate dioxygenase family. As to quaternary structure, hexamer; dimer of trimers. Fe cation serves as cofactor.

It catalyses the reaction homogentisate + O2 = 4-maleylacetoacetate + H(+). It participates in amino-acid degradation; L-phenylalanine degradation; acetoacetate and fumarate from L-phenylalanine: step 4/6. Functionally, involved in the catabolism of homogentisate (2,5-dihydroxyphenylacetate or 2,5-OH-PhAc), a central intermediate in the degradation of phenylalanine and tyrosine. Catalyzes the oxidative ring cleavage of the aromatic ring of homogentisate to yield maleylacetoacetate. The sequence is that of Homogentisate 1,2-dioxygenase from Xanthomonas oryzae pv. oryzae (strain KACC10331 / KXO85).